The primary structure comprises 248 residues: Large ribosomal subunit protein uL30 (248 aa).

The residue at position 1 (Met-1) is an N-acetylmethionine. A run of 4 repeats spans residues 7–18 (KKKEVPAVPETL), 19–30 (KKKRRNFAELKI), 31–42 (KRLRKKFAQKML), and 43–54 (RKARRKLIYEKA). The tract at residues 7–54 (KKKEVPAVPETLKKKRRNFAELKIKRLRKKFAQKMLRKARRKLIYEKA) is 4 X 12 AA tandem repeats. Thr-17 is subject to Phosphothreonine. The residue at position 124 (Lys-124) is an N6-acetyllysine. The residue at position 127 (Lys-127) is an N6-succinyllysine. Tyr-139 bears the Phosphotyrosine mark.

It belongs to the universal ribosomal protein uL30 family. As to quaternary structure, component of the large ribosomal subunit. Homodimer. Interacts with DHX33.

The protein resides in the cytoplasm. Component of the large ribosomal subunit. The ribosome is a large ribonucleoprotein complex responsible for the synthesis of proteins in the cell. Binds to G-rich structures in 28S rRNA and in mRNAs. Plays a regulatory role in the translation apparatus; inhibits cell-free translation of mRNAs. The polypeptide is Large ribosomal subunit protein uL30 (RPL7) (Homo sapiens (Human)).